Here is a 484-residue protein sequence, read N- to C-terminus: Aspartyl/glutamyl-tRNA(Asn/Gln) amidotransferase subunit B (484 aa).

The protein belongs to the GatB/GatE family. GatB subfamily. Heterotrimer of A, B and C subunits.

The catalysed reaction is L-glutamyl-tRNA(Gln) + L-glutamine + ATP + H2O = L-glutaminyl-tRNA(Gln) + L-glutamate + ADP + phosphate + H(+). It catalyses the reaction L-aspartyl-tRNA(Asn) + L-glutamine + ATP + H2O = L-asparaginyl-tRNA(Asn) + L-glutamate + ADP + phosphate + 2 H(+). Allows the formation of correctly charged Asn-tRNA(Asn) or Gln-tRNA(Gln) through the transamidation of misacylated Asp-tRNA(Asn) or Glu-tRNA(Gln) in organisms which lack either or both of asparaginyl-tRNA or glutaminyl-tRNA synthetases. The reaction takes place in the presence of glutamine and ATP through an activated phospho-Asp-tRNA(Asn) or phospho-Glu-tRNA(Gln). This chain is Aspartyl/glutamyl-tRNA(Asn/Gln) amidotransferase subunit B, found in Bordetella pertussis (strain Tohama I / ATCC BAA-589 / NCTC 13251).